We begin with the raw amino-acid sequence, 216 residues long: MGKIGIFGGTFDPPHYGHLLMANEVLDALQLSEIWFLPNRLPPHKQHEQVTKSEDRLRMLELAVAGHPRFHIETIELEREGPSYTYDTIRQLVAMHPNDEFYFIIGADMVEYLPHWHRIDELIELVTFVGVKRPGFSMETPYPVIEVEAPQFAVSSSLIRERVRNGQTIRYLVPEGVRLYIEEKGLYGARTGVTDRETTADRAALRAYAWRCRDRC.

It belongs to the NadD family.

It catalyses the reaction nicotinate beta-D-ribonucleotide + ATP + H(+) = deamido-NAD(+) + diphosphate. Its pathway is cofactor biosynthesis; NAD(+) biosynthesis; deamido-NAD(+) from nicotinate D-ribonucleotide: step 1/1. Catalyzes the reversible adenylation of nicotinate mononucleotide (NaMN) to nicotinic acid adenine dinucleotide (NaAD). This chain is Probable nicotinate-nucleotide adenylyltransferase, found in Geobacillus kaustophilus (strain HTA426).